We begin with the raw amino-acid sequence, 240 residues long: Ornithine decarboxylase antizyme (240 aa).

Disordered stretches follow at residues 18–45 (RSEPISSSNRATKRTISSSSSSSSSSAG) and 69–95 (DHDRASPLKEYNRKTSIDSTTTASSEF). Over residues 21-33 (PISSSNRATKRTI) the composition is skewed to polar residues. Residues 34 to 43 (SSSSSSSSSS) are compositionally biased toward low complexity. Positions 69-84 (DHDRASPLKEYNRKTS) are enriched in basic and acidic residues. Over residues 85–95 (IDSTTTASSEF) the composition is skewed to polar residues.

This sequence belongs to the ODC antizyme family. In terms of assembly, interacts with ODC1 and thereby sterically blocks ODC homodimerization. Preferentially expressed in adult female midguts.

Its function is as follows. Ornithine decarboxylase (ODC) antizyme protein that negatively regulates ODC activity and intracellular polyamine biosynthesis and uptake in response to increased intracellular polyamine levels. Binds to ODC monomers, inhibiting the assembly of the functional ODC homodimer, and targets the monomers for ubiquitin-independent proteolytic destruction by the 26S proteasome. In Aedes aegypti (Yellowfever mosquito), this protein is Ornithine decarboxylase antizyme (Oda).